Reading from the N-terminus, the 314-residue chain is Malate dehydrogenase (314 aa).

Residues 11 to 16 (GSGNIG) and Asp-35 contribute to the NAD(+) site. The substrate site is built by Arg-84 and Arg-90. NAD(+) contacts are provided by residues Asn-97 and 120 to 122 (ITN). The substrate site is built by Asn-122 and Arg-153. His-177 serves as the catalytic Proton acceptor.

Belongs to the LDH/MDH superfamily. MDH type 3 family.

It carries out the reaction (S)-malate + NAD(+) = oxaloacetate + NADH + H(+). Its function is as follows. Catalyzes the reversible oxidation of malate to oxaloacetate. This chain is Malate dehydrogenase, found in Rickettsia africae (strain ESF-5).